Consider the following 329-residue polypeptide: Peroxidase 30 (329 aa).

A signal peptide spans 1-27 (MKTMTQLNIAVVVVVTVLIGMLRSSEA). Intrachain disulfides connect cysteine 38–cysteine 116, cysteine 71–cysteine 76, cysteine 122–cysteine 324, and cysteine 201–cysteine 234. The Proton acceptor role is filled by histidine 69. Ca(2+) contacts are provided by aspartate 70, valine 73, glycine 75, aspartate 77, and serine 79. N-linked (GlcNAc...) asparagine glycans are attached at residues asparagine 83 and asparagine 155. The tract at residues 141 to 165 (SWSVPTGRRDGRISNKTEATNNIPP) is disordered. Residues 156–165 (KTEATNNIPP) show a composition bias toward polar residues. Proline 164 provides a ligand contact to substrate. Residue asparagine 169 is glycosylated (N-linked (GlcNAc...) asparagine). Heme b is bound at residue histidine 194. Residue threonine 195 participates in Ca(2+) binding. N-linked (GlcNAc...) asparagine glycans are attached at residues asparagine 210 and asparagine 240. Ca(2+)-binding residues include aspartate 247, serine 250, and aspartate 255. The N-linked (GlcNAc...) asparagine glycan is linked to asparagine 290.

The protein belongs to the peroxidase family. Classical plant (class III) peroxidase subfamily. Requires heme b as cofactor. Ca(2+) is required as a cofactor. Mainly expressed in roots.

Its subcellular location is the secreted. The catalysed reaction is 2 a phenolic donor + H2O2 = 2 a phenolic radical donor + 2 H2O. Functionally, removal of H(2)O(2), oxidation of toxic reductants, biosynthesis and degradation of lignin, suberization, auxin catabolism, response to environmental stresses such as wounding, pathogen attack and oxidative stress. These functions might be dependent on each isozyme/isoform in each plant tissue. The polypeptide is Peroxidase 30 (PER30) (Arabidopsis thaliana (Mouse-ear cress)).